The sequence spans 202 residues: MNKLFLILLLIFSHEVFSQTSAEVLQSKLNAIQTMTANFSQIVKAKNHEVSRSSGSMALQRPGRFRWQTKDPLEQLIVADGQKMWIYDVDLEQVTVKNQEKGLGGTAALFLSGYDETLTHDFDVSEKQKGKLTVFDLKSKSAKENFQRIKLIFSQSALIGLELYDQLGQITDVKLVQIKSNPKLPAKLFQFKPPKGVDVVKQ.

The first 18 residues, M1–S18, serve as a signal peptide directing secretion.

It belongs to the LolA family. Monomer.

The protein resides in the periplasm. Its function is as follows. Participates in the translocation of lipoproteins from the inner membrane to the outer membrane. Only forms a complex with a lipoprotein if the residue after the N-terminal Cys is not an aspartate (The Asp acts as a targeting signal to indicate that the lipoprotein should stay in the inner membrane). This chain is Outer-membrane lipoprotein carrier protein, found in Legionella pneumophila (strain Paris).